A 514-amino-acid polypeptide reads, in one-letter code: Endoglucanase MaCel5A (514 aa).

The first 23 residues, 1–23 (MKRILFTAGGCLFYLLLAVKAYA), serve as a signal peptide directing secretion. Composition is skewed to low complexity over residues 91–114 (GSSS…SGSG) and 179–201 (SSSS…SSSG). Disordered stretches follow at residues 91–118 (GSSS…SSSG) and 179–208 (SSSS…GGDS). Glutamate 346 serves as the catalytic Proton donor. Glutamate 439 functions as the Nucleophile in the catalytic mechanism.

It belongs to the glycosyl hydrolase 5 (cellulase A) family.

It catalyses the reaction Endohydrolysis of (1-&gt;4)-beta-D-glucosidic linkages in cellulose, lichenin and cereal beta-D-glucans.. Its activity is regulated as follows. Exhibits strong halostability and halotolerance. The activity increases about tenfold in the presence of 0.5 M NaCl, and about fivefold in the presence of 4.0 M NaCl. Tolerates detergents, but activity is decreased in the presence of EDTA. Activity is enhanced in the presence of Mn(2+), Ca(2+), Ba(2+) or Mg(2+), and decreased in the presence of Zn(2+), Cu(2+), Al(3+) or Fe(3+). Functionally, endoglucanase that exhibits highest activity toward barley beta-glucan, lower activity toward carboxymethyl cellulose (CMC-Na), and marginal activity toward laminarin and xylan. The sequence is that of Endoglucanase MaCel5A from Microbulbifer sp. (strain ALW1).